Consider the following 246-residue polypeptide: UPF0309 protein OB3413 (246 aa).

An SIS domain is found at 33–212 (MATAVMNGNS…VLKMIEIFEE (180 aa)).

It belongs to the UPF0309 family.

This is UPF0309 protein OB3413 from Oceanobacillus iheyensis (strain DSM 14371 / CIP 107618 / JCM 11309 / KCTC 3954 / HTE831).